The primary structure comprises 140 residues: Ribonuclease P protein component (140 aa).

Belongs to the RnpA family. As to quaternary structure, consists of a catalytic RNA component (M1 or rnpB) and a protein subunit.

It catalyses the reaction Endonucleolytic cleavage of RNA, removing 5'-extranucleotides from tRNA precursor.. RNaseP catalyzes the removal of the 5'-leader sequence from pre-tRNA to produce the mature 5'-terminus. It can also cleave other RNA substrates such as 4.5S RNA. The protein component plays an auxiliary but essential role in vivo by binding to the 5'-leader sequence and broadening the substrate specificity of the ribozyme. This chain is Ribonuclease P protein component, found in Nostoc sp. (strain PCC 7120 / SAG 25.82 / UTEX 2576).